Here is a 375-residue protein sequence, read N- to C-terminus: Sperm microtubule associated protein 2 (375 aa).

The tract at residues 1 to 78 is disordered; it reads MGELGEHRAS…MAGEELPETS (78 aa). Positions 59–75 are enriched in acidic residues; it reads EPEEEIPPEEMAGEELP. 7 THEG repeats span residues 110–129, 176–195, 214–233, 250–269, 282–301, 318–337, and 352–371; these read AKGR…PKTN, TITV…PKRF, STLE…PKVR, AAQM…PRPP, PKPY…PKAL, VTKN…PKIR, and ASLV…PKYI. Ser-287 bears the Phosphoserine mark.

As to quaternary structure, interacts with CCT5. Testis specific (at protein level). Specifically expressed in spermatids; Sertoli cells maintain the level of expression in spermatids. If isolated spermatids are cultivated for 16 hours alone, the expression of THEG is down-regulated. May require signals from Sertoli cells to initiate changes in its gene expression through spermatogenesis.

It is found in the nucleus. In terms of biological role, may be involved (but not essential) in spermatogenesis. The polypeptide is Sperm microtubule associated protein 2 (Mus musculus (Mouse)).